The chain runs to 231 residues: NADH-ubiquinone oxidoreductase chain 4 (231 aa).

6 helical membrane passes run 1-21, 34-54, 63-85, 89-111, 118-138, and 156-176; these read PIAG…YGII, LFLP…LTCL, IAYS…TPWG, AMAL…NTTY, ILIL…WWLL, and LLIM…LGLS.

This sequence belongs to the complex I subunit 4 family.

It is found in the mitochondrion membrane. The catalysed reaction is a ubiquinone + NADH + 5 H(+)(in) = a ubiquinol + NAD(+) + 4 H(+)(out). Functionally, core subunit of the mitochondrial membrane respiratory chain NADH dehydrogenase (Complex I) that is believed to belong to the minimal assembly required for catalysis. Complex I functions in the transfer of electrons from NADH to the respiratory chain. The immediate electron acceptor for the enzyme is believed to be ubiquinone. The polypeptide is NADH-ubiquinone oxidoreductase chain 4 (MT-ND4) (Ovophis okinavensis (Ryukyu Island pit viper)).